Reading from the N-terminus, the 522-residue chain is Thiamine biosynthetic bifunctional enzyme TH1, chloroplastic (522 aa).

The N-terminal 36 residues, 1-36 (MNSLGGIRSWPANWRSTTASMTTTESVRKVPQVLTV), are a transit peptide targeting the chloroplast. Residues 345–349 (QLREK) and Asn-377 each bind 4-amino-2-methyl-5-(diphosphooxymethyl)pyrimidine. 2 residues coordinate Mg(2+): Asp-378 and Asp-397. Residue Ser-416 participates in 4-amino-2-methyl-5-(diphosphooxymethyl)pyrimidine binding. 442 to 444 (TNT) provides a ligand contact to 2-[(2R,5Z)-2-carboxy-4-methylthiazol-5(2H)-ylidene]ethyl phosphate. Lys-445 is a binding site for 4-amino-2-methyl-5-(diphosphooxymethyl)pyrimidine. 2-[(2R,5Z)-2-carboxy-4-methylthiazol-5(2H)-ylidene]ethyl phosphate is bound by residues Gly-472 and 495–496 (VS).

Belongs to the thiamine-phosphate synthase family. Mg(2+) is required as a cofactor.

It localises to the plastid. The protein localises to the chloroplast. It catalyses the reaction 2-[(2R,5Z)-2-carboxy-4-methylthiazol-5(2H)-ylidene]ethyl phosphate + 4-amino-2-methyl-5-(diphosphooxymethyl)pyrimidine + 2 H(+) = thiamine phosphate + CO2 + diphosphate. The enzyme catalyses 2-(2-carboxy-4-methylthiazol-5-yl)ethyl phosphate + 4-amino-2-methyl-5-(diphosphooxymethyl)pyrimidine + 2 H(+) = thiamine phosphate + CO2 + diphosphate. The catalysed reaction is 4-methyl-5-(2-phosphooxyethyl)-thiazole + 4-amino-2-methyl-5-(diphosphooxymethyl)pyrimidine + H(+) = thiamine phosphate + diphosphate. It carries out the reaction 4-amino-5-hydroxymethyl-2-methylpyrimidine + ATP = 4-amino-2-methyl-5-(phosphooxymethyl)pyrimidine + ADP + H(+). It functions in the pathway cofactor biosynthesis; thiamine diphosphate biosynthesis; thiamine phosphate from 4-amino-2-methyl-5-diphosphomethylpyrimidine and 4-methyl-5-(2-phosphoethyl)-thiazole: step 1/1. Its pathway is cofactor biosynthesis; thiamine diphosphate biosynthesis; 4-amino-2-methyl-5-diphosphomethylpyrimidine from 5-amino-1-(5-phospho-D-ribosyl)imidazole: step 2/3. Essential for thiamine biosynthesis. Bifunctional enzyme that catalyzes the phosphorylation of hydroxymethylpyrimidine phosphate (HMP-P) to HMP-PP and condenses 4-methyl-5-(beta-hydroxyethyl)thiazole monophosphate (THZ-P) and 2-methyl-4-amino-5-hydroxymethyl pyrimidine pyrophosphate (HMP-PP) to form thiamine monophosphate (TMP). The protein is Thiamine biosynthetic bifunctional enzyme TH1, chloroplastic (TH1) of Arabidopsis thaliana (Mouse-ear cress).